The primary structure comprises 330 residues: Beta-ketoacyl-[acyl-carrier-protein] synthase III (330 aa).

Catalysis depends on residues C114 and H257. Positions 258 to 262 are ACP-binding; sequence QANLR. Residue N287 is part of the active site.

This sequence belongs to the thiolase-like superfamily. FabH family. As to quaternary structure, homodimer.

It localises to the cytoplasm. The enzyme catalyses malonyl-[ACP] + acetyl-CoA + H(+) = 3-oxobutanoyl-[ACP] + CO2 + CoA. It functions in the pathway lipid metabolism; fatty acid biosynthesis. Its function is as follows. Catalyzes the condensation reaction of fatty acid synthesis by the addition to an acyl acceptor of two carbons from malonyl-ACP. Catalyzes the first condensation reaction which initiates fatty acid synthesis and may therefore play a role in governing the total rate of fatty acid production. Possesses both acetoacetyl-ACP synthase and acetyl transacylase activities. Its substrate specificity determines the biosynthesis of branched-chain and/or straight-chain of fatty acids. This is Beta-ketoacyl-[acyl-carrier-protein] synthase III from Oleidesulfovibrio alaskensis (strain ATCC BAA-1058 / DSM 17464 / G20) (Desulfovibrio alaskensis).